The following is a 153-amino-acid chain: Interleukin-2 (153 aa).

The signal sequence occupies residues 1-20 (MYRMQLLSCIALSLALVTNS). O-linked (GalNAc...) threonine glycosylation is present at T23. A disulfide bond links C78 and C125.

Belongs to the IL-2 family.

It localises to the secreted. Its function is as follows. Cytokine produced by activated CD4-positive helper T-cells and to a lesser extend activated CD8-positive T-cells and natural killer (NK) cells that plays pivotal roles in the immune response and tolerance. Binds to a receptor complex composed of either the high-affinity trimeric IL-2R (IL2RA/CD25, IL2RB/CD122 and IL2RG/CD132) or the low-affinity dimeric IL-2R (IL2RB and IL2RG). Interaction with the receptor leads to oligomerization and conformation changes in the IL-2R subunits resulting in downstream signaling starting with phosphorylation of JAK1 and JAK3. In turn, JAK1 and JAK3 phosphorylate the receptor to form a docking site leading to the phosphorylation of several substrates including STAT5. This process leads to activation of several pathways including STAT, phosphoinositide-3-kinase/PI3K and mitogen-activated protein kinase/MAPK pathways. Functions as a T-cell growth factor and can increase NK-cell cytolytic activity as well. Promotes strong proliferation of activated B-cells and subsequently immunoglobulin production. Plays a pivotal role in regulating the adaptive immune system by controlling the survival and proliferation of regulatory T-cells, which are required for the maintenance of immune tolerance. Moreover, participates in the differentiation and homeostasis of effector T-cell subsets, including Th1, Th2, Th17 as well as memory CD8-positive T-cells. In Homo sapiens (Human), this protein is Interleukin-2 (IL2).